A 676-amino-acid chain; its full sequence is Methionine--tRNA ligase (676 aa).

The 'HIGH' region signature appears at 15 to 25 (PYANGPIHLGH). The Zn(2+) site is built by C146, C149, C159, and C162. The 'KMSKS' region signature appears at 332-336 (KMSKS). K335 provides a ligand contact to ATP. A tRNA-binding domain is found at 575 to 676 (DFAKIDLRIA…EGAQPGMRVK (102 aa)).

It belongs to the class-I aminoacyl-tRNA synthetase family. MetG type 1 subfamily. As to quaternary structure, homodimer. Requires Zn(2+) as cofactor.

The protein resides in the cytoplasm. The enzyme catalyses tRNA(Met) + L-methionine + ATP = L-methionyl-tRNA(Met) + AMP + diphosphate. Functionally, is required not only for elongation of protein synthesis but also for the initiation of all mRNA translation through initiator tRNA(fMet) aminoacylation. The protein is Methionine--tRNA ligase of Shewanella sp. (strain MR-7).